We begin with the raw amino-acid sequence, 564 residues long: Protein CPR-5 (564 aa).

A disordered region spans residues 1 to 87 (MEALLLPPSP…TSNSNSTKRV (87 aa)). Residues 12-28 (PQNQITNPANSKPNHQS) are compositionally biased toward polar residues. Positions 29 to 38 (GDVHKDETMM) are enriched in basic and acidic residues. Positions 69 to 84 (SSSYCSTSSTSNSNST) are enriched in low complexity. 5 helical membrane passes run 347–367 (IMDWLLVSVFSMLASMVLGVY), 411–431 (VRVWVQIFFGVLMIIVFTYFL), 443–463 (PISFIVLFLGIFCGVSGKLCV), 472–492 (LWLIVWEVFCLLQFVANVFTL), and 526–546 (VYVVILFVLPVINGLLPFATF).

In terms of assembly, interacts with SIM and SMR1. In terms of tissue distribution, ubiquitous.

It localises to the membrane. It is found in the nucleus membrane. In terms of biological role, may play a role in transcriptional processes. Negatively regulates the senescence and chlorotic lesions induced by biotic (e.g. pathogens) and abiotic (e.g. sugars, darkness) agents, probably by controlling programmed cell death (pcd). Negative regulator of plant programmed cell death (PCD) and effector-triggered immunity (ETI). Promotes cell division and endoreduplication (e.g. in trichomes). The protein is Protein CPR-5 of Arabidopsis thaliana (Mouse-ear cress).